A 152-amino-acid chain; its full sequence is FAD synthase (152 aa).

Residues 9–10, 14–17, and D92 each bind ATP; these read TF and HPGH.

It belongs to the archaeal FAD synthase family. In terms of assembly, homodimer. It depends on a divalent metal cation as a cofactor.

The enzyme catalyses FMN + ATP + H(+) = FAD + diphosphate. It participates in cofactor biosynthesis; FAD biosynthesis; FAD from FMN: step 1/1. In terms of biological role, catalyzes the transfer of the AMP portion of ATP to flavin mononucleotide (FMN) to produce flavin adenine dinucleotide (FAD) coenzyme. The chain is FAD synthase from Ferroglobus placidus (strain DSM 10642 / AEDII12DO).